A 794-amino-acid chain; its full sequence is Furin (794 aa).

Positions 1–26 (MELRPWLLWVVAATGTLVLLAADAQG) are cleaved as a signal peptide. A propeptide spans 27 to 107 (QKVFTNTWAV…QQVAKRRTKR (81 aa)) (inhibition peptide). Residues 108–715 (DVYQEPTDPK…AGLLPSHLPE (608 aa)) are Lumenal-facing. D115 is a binding site for Ca(2+). A Peptidase S8 domain is found at 121–435 (QWYLSGVTQR…YGLLDAGAMV (315 aa)). D153 acts as the Charge relay system in catalysis. Substrate is bound at residue D154. D162, D174, D179, and D181 together coordinate Ca(2+). The disordered stretch occupies residues 162-183 (DLAGNYDPGASFDVNDQDPDPQ). 191–192 (DN) contacts substrate. The active-site Charge relay system is the H194. Ca(2+) is bound by residues V205, N208, V210, and G212. 2 cysteine pairs are disulfide-bonded: C211-C360 and C303-C333. Substrate contacts are provided by residues E236, 253–258 (SWGPED), D264, and 292–295 (ASGN). D258 is a binding site for Ca(2+). D301 lines the Ca(2+) pocket. 2 residues coordinate substrate: D306 and Y308. Position 331 (E331) interacts with Ca(2+). S368 serves as the catalytic Charge relay system. S368 lines the substrate pocket. N-linked (GlcNAc...) asparagine glycosylation is found at N387 and N440. One can recognise a P/Homo B domain in the interval 444–576 (VAPQRKCIID…TLVLYGTAPE (133 aa)). Residues C450 and C474 are joined by a disulfide bond. A Cell attachment site motif is present at residues 498–500 (RGD). N553 carries an N-linked (GlcNAc...) asparagine glycan. 2 FU repeats span residues 577-620 (GLPV…GFAP) and 638-681 (ASVC…QSQS). The disordered stretch occupies residues 673-696 (QTCSRQSQSSRESPPQQQPPRLPP). The segment covering 676–687 (SRQSQSSRESPP) has biased composition (low complexity). Residues 716–738 (VVAGLSCAFIVLVFVTVFLVLQL) form a helical membrane-spanning segment. Over 739–794 (RSGFSFRGVKVYTMDRGLISYKGLPPEAWQEECPSDSEEDEGRGERTAFIKDQSAL) the chain is Cytoplasmic. The segment at 759 to 762 (YKGL) is cell surface signal. Over residues 767–780 (WQEECPSDSEEDEG) the composition is skewed to acidic residues. The segment at 767 to 794 (WQEECPSDSEEDEGRGERTAFIKDQSAL) is disordered. 2 positions are modified to phosphoserine; by CK2: S773 and S775. A Trans Golgi network signal motif is present at residues 773-779 (SDSEEDE).

The protein belongs to the peptidase S8 family. Furin subfamily. In terms of assembly, interacts with FLNA. Binds to PACS1 which mediates TGN localization and connection to clathrin adapters. Interacts with LAMP1, LAMP2 and LAMP3. The cofactor is Ca(2+). In terms of processing, the inhibition peptide, which plays the role of an intramolecular chaperone, is autocatalytically removed in the endoplasmic reticulum (ER) and remains non-covalently bound to furin as a potent autoinhibitor. Following transport to the trans Golgi, a second cleavage within the inhibition propeptide results in propeptide dissociation and furin activation. Post-translationally, phosphorylation is required for TGN localization of the endoprotease. In vivo, exists as di-, mono- and non-phosphorylated forms. As to expression, seems to be expressed ubiquitously.

It localises to the golgi apparatus. It is found in the trans-Golgi network membrane. The protein localises to the cell membrane. The protein resides in the secreted. Its subcellular location is the endosome membrane. It catalyses the reaction Release of mature proteins from their proproteins by cleavage of -Arg-Xaa-Yaa-Arg-|-Zaa- bonds, where Xaa can be any amino acid and Yaa is Arg or Lys. Releases albumin, complement component C3 and von Willebrand factor from their respective precursors.. With respect to regulation, inhibited by the not secondly cleaved propeptide. Inhibited by m-guanidinomethyl-phenylacetyl-Arg-Val-Arg-(amidomethyl)-benzamidine (m-guanidinomethyl-Phac-RVR-Amb) and 4-guanidinomethyl-phenylacetyl-Arg-Tle-Arg-4-amidinobenzylamide (MI-1148). Inhibited by Decanoyl-Arg-Val-Lys-Arg-chloromethylketone (decanoyl-RVKR-CMK). Inhibited by heparin/heparan sulfate-binding. Functionally, ubiquitous endoprotease within constitutive secretory pathways capable of cleavage at the RX(K/R)R consensus motif. Mediates processing of TGFB1, an essential step in TGF-beta-1 activation. Converts through proteolytic cleavage the non-functional Brain natriuretic factor prohormone into its active hormone BNP(1-32). By mediating processing of accessory subunit ATP6AP1/Ac45 of the V-ATPase, regulates the acidification of dense-core secretory granules in islets of Langerhans cells. Its function is as follows. (Microbial infection) Cleaves and activates diphtheria toxin DT. In terms of biological role, (Microbial infection) Cleaves and activates anthrax toxin protective antigen (PA). (Microbial infection) Cleaves and activates HIV-1 virus Envelope glycoprotein gp160. Functionally, (Microbial infection) Required for H7N1 and H5N1 influenza virus infection probably by cleaving hemagglutinin. Its function is as follows. (Microbial infection) Able to cleave S.pneumoniae serine-rich repeat protein PsrP. In terms of biological role, (Microbial infection) Facilitates human coronaviruses EMC and SARS-CoV-2 infections by proteolytically cleaving the spike protein at the monobasic S1/S2 cleavage site. This cleavage is essential for spike protein-mediated cell-cell fusion and entry into human lung cells. (Microbial infection) Facilitates mumps virus infection by proteolytically cleaving the viral fusion protein F. In Homo sapiens (Human), this protein is Furin.